Reading from the N-terminus, the 317-residue chain is Acetyl-coenzyme A carboxylase carboxyl transferase subunit alpha (317 aa).

Residues 40–293 (LEVRVREAIL…GDVIANALAE (254 aa)) enclose the CoA carboxyltransferase C-terminal domain.

This sequence belongs to the AccA family. Acetyl-CoA carboxylase is a heterohexamer composed of biotin carboxyl carrier protein (AccB), biotin carboxylase (AccC) and two subunits each of ACCase subunit alpha (AccA) and ACCase subunit beta (AccD).

The protein localises to the cytoplasm. It carries out the reaction N(6)-carboxybiotinyl-L-lysyl-[protein] + acetyl-CoA = N(6)-biotinyl-L-lysyl-[protein] + malonyl-CoA. The protein operates within lipid metabolism; malonyl-CoA biosynthesis; malonyl-CoA from acetyl-CoA: step 1/1. Functionally, component of the acetyl coenzyme A carboxylase (ACC) complex. First, biotin carboxylase catalyzes the carboxylation of biotin on its carrier protein (BCCP) and then the CO(2) group is transferred by the carboxyltransferase to acetyl-CoA to form malonyl-CoA. The sequence is that of Acetyl-coenzyme A carboxylase carboxyl transferase subunit alpha from Rhizobium etli (strain CIAT 652).